The chain runs to 125 residues: Large ribosomal subunit protein bL12 (125 aa).

The protein belongs to the bacterial ribosomal protein bL12 family. Homodimer. Part of the ribosomal stalk of the 50S ribosomal subunit. Forms a multimeric L10(L12)X complex, where L10 forms an elongated spine to which 2 to 4 L12 dimers bind in a sequential fashion. Binds GTP-bound translation factors.

Its function is as follows. Forms part of the ribosomal stalk which helps the ribosome interact with GTP-bound translation factors. Is thus essential for accurate translation. This is Large ribosomal subunit protein bL12 from Mesorhizobium japonicum (strain LMG 29417 / CECT 9101 / MAFF 303099) (Mesorhizobium loti (strain MAFF 303099)).